The following is a 217-amino-acid chain: Ribonuclease T (217 aa).

The region spanning 20-195 is the Exonuclease domain; that stretch reads VVVDVETAGL…YDTERTAMLF (176 aa). Mg(2+)-binding residues include aspartate 23, glutamate 25, histidine 182, and aspartate 187. Histidine 182 functions as the Proton donor/acceptor in the catalytic mechanism.

Belongs to the RNase T family. Homodimer. Mg(2+) is required as a cofactor.

Functionally, trims short 3' overhangs of a variety of RNA species, leaving a one or two nucleotide 3' overhang. Responsible for the end-turnover of tRNA: specifically removes the terminal AMP residue from uncharged tRNA (tRNA-C-C-A). Also appears to be involved in tRNA biosynthesis. The chain is Ribonuclease T from Blochmanniella pennsylvanica (strain BPEN).